The following is a 942-amino-acid chain: UvrABC system protein A (942 aa).

Position 32–39 (32–39) interacts with ATP; the sequence is GLSGSGKS. The C4-type zinc-finger motif lies at 251–278; sequence CPVCGFTVPELEPRLFSFNAPFGSCPTC. ABC transporter domains follow at residues 308 to 589 and 609 to 937; these read WNPI…KKSI and GNGR…HYLK. Residue 641-648 coordinates ATP; the sequence is GVSGSGKS. A C4-type zinc finger spans residues 740-766; sequence CEACSGDGIIKIEMHFLPDVYVPCEVC.

It belongs to the ABC transporter superfamily. UvrA family. As to quaternary structure, forms a heterotetramer with UvrB during the search for lesions.

It localises to the cytoplasm. Its function is as follows. The UvrABC repair system catalyzes the recognition and processing of DNA lesions. UvrA is an ATPase and a DNA-binding protein. A damage recognition complex composed of 2 UvrA and 2 UvrB subunits scans DNA for abnormalities. When the presence of a lesion has been verified by UvrB, the UvrA molecules dissociate. The polypeptide is UvrABC system protein A (Streptococcus pyogenes serotype M6 (strain ATCC BAA-946 / MGAS10394)).